Consider the following 211-residue polypeptide: Protein-L-isoaspartate O-methyltransferase (211 aa).

Serine 62 is an active-site residue.

This sequence belongs to the methyltransferase superfamily. L-isoaspartyl/D-aspartyl protein methyltransferase family.

It is found in the cytoplasm. The enzyme catalyses [protein]-L-isoaspartate + S-adenosyl-L-methionine = [protein]-L-isoaspartate alpha-methyl ester + S-adenosyl-L-homocysteine. Catalyzes the methyl esterification of L-isoaspartyl residues in peptides and proteins that result from spontaneous decomposition of normal L-aspartyl and L-asparaginyl residues. It plays a role in the repair and/or degradation of damaged proteins. This Shewanella piezotolerans (strain WP3 / JCM 13877) protein is Protein-L-isoaspartate O-methyltransferase.